A 346-amino-acid chain; its full sequence is MEEEKHHTEHVPEWKKDEIENIMELIQSHKVFGMVGIEGILATKIQKIRRDLKDVAVLKVSRNSLTERALNQLGESIPEMNKYLDKQTALVFTNESPFKLYKVLEQTKTPSPIKGGAIAPADIIVQKGPTSFPPGPILGELQSAGIPASIDAGKVAVKETKVVCKAGEVVSQKLATMLTKLEIYPLIVGLDLRAVYDNGAIYEPELLAIDESQYFSDITRAAQSAFNLAVNTAYPTSATIGTLLAKAFAESKNLGVNAVVFDSGVMDALLAKAHVQMTSVASEAADKDANAVDDQLREVLGAAASAAAAVAKEPEKKEEVKEEEEEEEEEDHSEEDGMAGLGSLFG.

A disordered region spans residues 307 to 346 (AAAVAKEPEKKEEVKEEEEEEEEEDHSEEDGMAGLGSLFG). Positions 321–337 (KEEEEEEEEEDHSEEDG) are enriched in acidic residues.

This sequence belongs to the universal ribosomal protein uL10 family. In terms of assembly, part of the 50S ribosomal subunit. Forms part of the ribosomal stalk which helps the ribosome interact with GTP-bound translation factors. Forms both a pentameric L10(L12)2(L12)2 and heptameric L10(L12)2(L12)2(L12)2 complex, where L10 forms an elongated spine to which the L12 dimers bind in a sequential fashion. The proportion of heptameric complexes increases during cell growth.

Forms part of the ribosomal stalk, playing a central role in the interaction of the ribosome with GTP-bound translation factors. The sequence is that of Large ribosomal subunit protein uL10 from Methanosarcina barkeri (strain Fusaro / DSM 804).